A 2493-amino-acid chain; its full sequence is Non-reducing polyketide synthase pkiA (2493 aa).

The segment at 129–243 is N-terminal acylcarrier protein transacylase domain (SAT); it reads PLLMMTHFVQ…VQYDENRATI (115 aa). Cysteine 160 acts as the Nucleophile; for transacylase activity in catalysis. Histidine 274 functions as the Proton donor/acceptor; for transacylase activity in the catalytic mechanism. The Ketosynthase family 3 (KS3) domain maps to 401 to 818; the sequence is ETDIAIVGMA…GSNASMVITQ (418 aa). Active-site for beta-ketoacyl synthase activity residues include cysteine 567, histidine 702, and histidine 741. The interval 926 to 1261 is malonyl-CoA:ACP transacylase (MAT); it reads CFGGQVGRSI…EYAPLLLPPY (336 aa). The interval 1259-1387 is N-terminal hotdog fold; the sequence is PPYQFERTRH…AHISMHDVRC (129 aa). Positions 1259-1562 constitute a PKS/mFAS DH domain; sequence PPYQFERTRH…YSRVAKSLFT (304 aa). Histidine 1291 acts as the Proton acceptor; for dehydratase activity in catalysis. A product template (PT) domain region spans residues 1297 to 1558; it reads APIAPATLLL…LGLRYSRVAK (262 aa). A C-terminal hotdog fold region spans residues 1415-1562; it reads VDDILQGRNV…YSRVAKSLFT (148 aa). The active-site Proton donor; for dehydratase activity is the aspartate 1471. The Carrier domain maps to 1588–1662; sequence KDLVSRVKAV…DLVQAVQSAL (75 aa). Serine 1622 carries the O-(pantetheine 4'-phosphoryl)serine modification. The tract at residues 1822-2063 is methyltransferase (CMeT) domain; it reads REYPEYGGAS…YGHVDWTDGE (242 aa). The interval 2128–2366 is NADPH-binding domain; the sequence is VTGATGSLGS…TPVDVAARII (239 aa).

It depends on pantetheine 4'-phosphate as a cofactor.

The enzyme catalyses decanoyl-[ACP] + 4 malonyl-CoA + AH2 + S-adenosyl-L-methionine + 3 H(+) = 2,4-dihydroxy-3-methyl-6-(2-oxoundecyl)benzaldehyde + holo-[ACP] + A + S-adenosyl-L-homocysteine + 4 CO2 + 4 CoA + H2O. It participates in secondary metabolite biosynthesis. In terms of biological role, non-reducing polyketide synthase; part of the pki gene cluster that mediates the biosynthesis of 2,4-dihydroxy-3-methyl-6-(2-oxoundecyl)benzaldehyde. The first step in the pathway is the generation of the decanoyl starter unit by the FAS composed of subunits pkiB and pkiC, which is then transferred directly from the FAS to the SAT domain of the non-reducing polyketide synthase pkiA. PkiA condenses the decanoyyl starter unit with 4 malonyl-CoA units and performs one methylation step to yield 2,4-dihydroxy-3-methyl-6-(2-oxoundecyl)benzaldehyde. This chain is Non-reducing polyketide synthase pkiA, found in Emericella nidulans (strain FGSC A4 / ATCC 38163 / CBS 112.46 / NRRL 194 / M139) (Aspergillus nidulans).